The following is a 436-amino-acid chain: Phosphomethylpyrimidine synthase (436 aa).

Residues Asn69, Met98, Tyr127, His163, 185-187 (SRG), 226-229 (DACR), and Glu265 each bind substrate. A Zn(2+)-binding site is contributed by His269. Substrate is bound at residue Tyr292. Residue His333 participates in Zn(2+) binding. Positions 409, 412, and 416 each coordinate [4Fe-4S] cluster.

Belongs to the ThiC family. Requires [4Fe-4S] cluster as cofactor.

The catalysed reaction is 5-amino-1-(5-phospho-beta-D-ribosyl)imidazole + S-adenosyl-L-methionine = 4-amino-2-methyl-5-(phosphooxymethyl)pyrimidine + CO + 5'-deoxyadenosine + formate + L-methionine + 3 H(+). Its pathway is cofactor biosynthesis; thiamine diphosphate biosynthesis. Functionally, catalyzes the synthesis of the hydroxymethylpyrimidine phosphate (HMP-P) moiety of thiamine from aminoimidazole ribotide (AIR) in a radical S-adenosyl-L-methionine (SAM)-dependent reaction. The protein is Phosphomethylpyrimidine synthase of Clostridium perfringens (strain SM101 / Type A).